The sequence spans 340 residues: Biotin synthase (340 aa).

Positions 56–283 constitute a Radical SAM core domain; it reads NAVQLSTLLS…KAVVRLSAGR (228 aa). [4Fe-4S] cluster-binding residues include Cys71, Cys75, and Cys78. [2Fe-2S] cluster-binding residues include Cys115, Cys146, Cys206, and Arg278.

It belongs to the radical SAM superfamily. Biotin synthase family. As to quaternary structure, homodimer. The cofactor is [4Fe-4S] cluster. Requires [2Fe-2S] cluster as cofactor.

The enzyme catalyses (4R,5S)-dethiobiotin + (sulfur carrier)-SH + 2 reduced [2Fe-2S]-[ferredoxin] + 2 S-adenosyl-L-methionine = (sulfur carrier)-H + biotin + 2 5'-deoxyadenosine + 2 L-methionine + 2 oxidized [2Fe-2S]-[ferredoxin]. It participates in cofactor biosynthesis; biotin biosynthesis; biotin from 7,8-diaminononanoate: step 2/2. In terms of biological role, catalyzes the conversion of dethiobiotin (DTB) to biotin by the insertion of a sulfur atom into dethiobiotin via a radical-based mechanism. The sequence is that of Biotin synthase from Burkholderia lata (strain ATCC 17760 / DSM 23089 / LMG 22485 / NCIMB 9086 / R18194 / 383).